The sequence spans 259 residues: Ribonuclease PH (259 aa).

Residues Arg88 and 126–128 (GTR) contribute to the phosphate site.

This sequence belongs to the RNase PH family. Homohexameric ring arranged as a trimer of dimers.

It carries out the reaction tRNA(n+1) + phosphate = tRNA(n) + a ribonucleoside 5'-diphosphate. Its function is as follows. Phosphorolytic 3'-5' exoribonuclease that plays an important role in tRNA 3'-end maturation. Removes nucleotide residues following the 3'-CCA terminus of tRNAs; can also add nucleotides to the ends of RNA molecules by using nucleoside diphosphates as substrates, but this may not be physiologically important. Probably plays a role in initiation of 16S rRNA degradation (leading to ribosome degradation) during starvation. The sequence is that of Ribonuclease PH from Mycolicibacterium paratuberculosis (strain ATCC BAA-968 / K-10) (Mycobacterium paratuberculosis).